The sequence spans 513 residues: GMP synthase [glutamine-hydrolyzing] (513 aa).

Residues 5–195 enclose the Glutamine amidotransferase type-1 domain; it reads LVLVIDFGGQ…VYNICGCTGD (191 aa). Residue C82 is the Nucleophile of the active site. Residues H169 and E171 contribute to the active site. Residues 196 to 388 form the GMPS ATP-PPase domain; that stretch reads WKMDSFVEKT…LGIPEKLVFR (193 aa). 223 to 229 provides a ligand contact to ATP; that stretch reads SGGVDSS.

In terms of assembly, homodimer.

It carries out the reaction XMP + L-glutamine + ATP + H2O = GMP + L-glutamate + AMP + diphosphate + 2 H(+). It participates in purine metabolism; GMP biosynthesis; GMP from XMP (L-Gln route): step 1/1. In terms of biological role, catalyzes the synthesis of GMP from XMP. In Clostridium botulinum (strain Eklund 17B / Type B), this protein is GMP synthase [glutamine-hydrolyzing].